The primary structure comprises 503 residues: UDP-N-acetylmuramoylalanine--D-glutamate ligase (503 aa).

Residue 129–135 participates in ATP binding; it reads GTNGKTT.

The protein belongs to the MurCDEF family.

Its subcellular location is the cytoplasm. The enzyme catalyses UDP-N-acetyl-alpha-D-muramoyl-L-alanine + D-glutamate + ATP = UDP-N-acetyl-alpha-D-muramoyl-L-alanyl-D-glutamate + ADP + phosphate + H(+). Its pathway is cell wall biogenesis; peptidoglycan biosynthesis. Functionally, cell wall formation. Catalyzes the addition of glutamate to the nucleotide precursor UDP-N-acetylmuramoyl-L-alanine (UMA). This chain is UDP-N-acetylmuramoylalanine--D-glutamate ligase, found in Burkholderia cenocepacia (strain HI2424).